Here is a 415-residue protein sequence, read N- to C-terminus: Diaminopimelate decarboxylase (415 aa).

Lys54 bears the N6-(pyridoxal phosphate)lysine mark. Pyridoxal 5'-phosphate-binding positions include Gly223 and Glu264 to Arg267. 3 residues coordinate substrate: Arg267, Arg303, and Tyr307. Residue Cys338 is the Proton donor of the active site. Glu339 and Tyr374 together coordinate substrate. Tyr374 lines the pyridoxal 5'-phosphate pocket.

This sequence belongs to the Orn/Lys/Arg decarboxylase class-II family. LysA subfamily. In terms of assembly, homodimer. Pyridoxal 5'-phosphate is required as a cofactor.

It catalyses the reaction meso-2,6-diaminopimelate + H(+) = L-lysine + CO2. It functions in the pathway amino-acid biosynthesis; L-lysine biosynthesis via DAP pathway; L-lysine from DL-2,6-diaminopimelate: step 1/1. Specifically catalyzes the decarboxylation of meso-diaminopimelate (meso-DAP) to L-lysine. This Buchnera aphidicola subsp. Acyrthosiphon pisum (strain APS) (Acyrthosiphon pisum symbiotic bacterium) protein is Diaminopimelate decarboxylase.